A 679-amino-acid chain; its full sequence is Methionine--tRNA ligase (679 aa).

Positions 14 to 24 (PYANGSIHLGH) match the 'HIGH' region motif. Zn(2+) is bound by residues C145, C148, C158, and C161. Residues 331–335 (KMSKS) carry the 'KMSKS' region motif. K334 is an ATP binding site. A tRNA-binding domain is found at 577 to 679 (TFAAVDLRVA…SGAKPGQRIK (103 aa)).

It belongs to the class-I aminoacyl-tRNA synthetase family. MetG type 1 subfamily. As to quaternary structure, homodimer. Requires Zn(2+) as cofactor.

The protein localises to the cytoplasm. The catalysed reaction is tRNA(Met) + L-methionine + ATP = L-methionyl-tRNA(Met) + AMP + diphosphate. Is required not only for elongation of protein synthesis but also for the initiation of all mRNA translation through initiator tRNA(fMet) aminoacylation. The polypeptide is Methionine--tRNA ligase (Pseudomonas entomophila (strain L48)).